The following is a 292-amino-acid chain: MKGTIIKGIGGFYYIKIDNSEEIIECKARGKFRHTELTPMIGDYVEISIDKNNKGAIEKIYERRSELFRPAVANVTQALVVFSFKNPDINIDLLNKFLLLCEYNNLKAIVCFNKMDLVNKEDYKDIISMIEQAGYDIIFLNAKEERNMDIIKKLIKDNVTVFCGPSGVGKSTMLNKIIGKETMITGNISEKLKRGKHTTRHSELIYVDEGLLVDTPGFSSLDINFMEKEDLLHCIPEFRDFIGECKFTGCLHHREPNCAVKKAVEEGHIHKDRYNFYIKTLEEFMNRRKKKW.

Residues 64–221 (RSELFRPAVA…LVDTPGFSSL (158 aa)) enclose the CP-type G domain. GTP-binding positions include 113–116 (NKMD) and 164–172 (GPSGVGKST). 4 residues coordinate Zn(2+): cysteine 245, cysteine 250, histidine 252, and cysteine 258.

It belongs to the TRAFAC class YlqF/YawG GTPase family. RsgA subfamily. Monomer. Associates with 30S ribosomal subunit, binds 16S rRNA. The cofactor is Zn(2+).

The protein resides in the cytoplasm. In terms of biological role, one of several proteins that assist in the late maturation steps of the functional core of the 30S ribosomal subunit. Helps release RbfA from mature subunits. May play a role in the assembly of ribosomal proteins into the subunit. Circularly permuted GTPase that catalyzes slow GTP hydrolysis, GTPase activity is stimulated by the 30S ribosomal subunit. The protein is Small ribosomal subunit biogenesis GTPase RsgA of Clostridium botulinum (strain ATCC 19397 / Type A).